The primary structure comprises 277 residues: Carbonyl reductase [NADPH] 1 (277 aa).

Serine 2 bears the N-acetylserine mark. Phosphoserine occurs at positions 2 and 30. NADP(+) contacts are provided by residues 10 to 34 (VTGA…GDVV), 63 to 64 (DI), and asparagine 90. Glutathione is bound by residues 95–97 (FKT) and glutamine 106. Serine 140 lines the substrate pocket. 193–194 (AY) is a glutathione binding site. Tyrosine 194 acts as the Proton acceptor in catalysis. Residues 194 to 198 (YGVTK) and 231 to 233 (VRT) each bind NADP(+). Lysine 239 is subject to N6-1-carboxyethyl lysine.

The protein belongs to the short-chain dehydrogenases/reductases (SDR) family. As to quaternary structure, monomer.

It localises to the cytoplasm. The catalysed reaction is a secondary alcohol + NADP(+) = a ketone + NADPH + H(+). The enzyme catalyses prostaglandin F2alpha + NADP(+) = prostaglandin E2 + NADPH + H(+). It catalyses the reaction prostaglandin E1 + NADP(+) = 15-oxoprostaglandin E1 + NADPH + H(+). It carries out the reaction menadione + NADPH + H(+) = menadiol + NADP(+). The catalysed reaction is prostaglandin D2 + NADP(+) = 15-oxoprostaglandin D2 + NADPH + H(+). The enzyme catalyses prostaglandin E2 + NADP(+) = 15-oxoprostaglandin E2 + NADPH + H(+). It catalyses the reaction prostaglandin F2alpha + NADP(+) = 15-oxoprostaglandin F2alpha + NADPH + H(+). It carries out the reaction daunorubicin + NADPH + H(+) = 13-dihydrodaunorubicin + NADP(+). The catalysed reaction is S-nitrosoglutathione + NADPH + H(+) = S-(hydroxysulfenamide)glutathione + NADP(+). The enzyme catalyses a primary alcohol + NADP(+) = an aldehyde + NADPH + H(+). It catalyses the reaction cortisol + NADPH + H(+) = 20beta-dihydrocortisol + NADP(+). It carries out the reaction corticosterone + NADPH + H(+) = 20beta-dihydrocorticosterone + NADP(+). Functionally, NADPH-dependent reductase with broad substrate specificity. Catalyzes the reduction of a wide variety of carbonyl compounds including quinones, prostaglandins, menadione, plus various xenobiotics. Catalyzes the reduction of the antitumor anthracyclines doxorubicin and daunorubicin to the cardiotoxic compounds doxorubicinol and daunorubicinol. Can convert prostaglandin E to prostaglandin F2-alpha. Can bind glutathione, which explains its higher affinity for glutathione-conjugated substrates. Catalyzes the reduction of S-nitrosoglutathione. In addition, participates in the glucocorticoid metabolism by catalyzing the NADPH-dependent cortisol/corticosterone into 20beta-dihydrocortisol (20b-DHF) or 20beta-corticosterone (20b-DHB), which are weak agonists of NR3C1 and NR3C2 in adipose tissue. This is Carbonyl reductase [NADPH] 1 from Bos taurus (Bovine).